We begin with the raw amino-acid sequence, 116 residues long: Large ribosomal subunit protein bL19 (116 aa).

This sequence belongs to the bacterial ribosomal protein bL19 family.

This protein is located at the 30S-50S ribosomal subunit interface and may play a role in the structure and function of the aminoacyl-tRNA binding site. The protein is Large ribosomal subunit protein bL19 of Blochmanniella pennsylvanica (strain BPEN).